Here is a 259-residue protein sequence, read N- to C-terminus: Protein TILLER ANGLE CONTROL 1 (259 aa).

The short motif at 56–62 is the IGT motif element; the sequence is GILAIGT. Disordered regions lie at residues 96–123, 206–226, and 239–259; these read EEKA…AKMH, SCME…PLKA, and GKKI…PVTA. The span at 109–119 shows a compositional bias: low complexity; that stretch reads APSEPASALEP.

The protein belongs to the TAC family. In terms of tissue distribution, expressed in the basal part of seedlings.

Involved in the regulation of tiller growth angle. Promotes horizontal shoot growth. TAC1 and LAZY1 play opposite functions in the regulation of tiller growth angle. The chain is Protein TILLER ANGLE CONTROL 1 from Oryza sativa subsp. indica (Rice).